A 195-amino-acid chain; its full sequence is Myosin regulatory light chain, striated muscle, 25 kDa isoform (195 aa).

Over residues 1–17 (AKDKEKKEKKDKKKDDA) the composition is skewed to basic and acidic residues. The tract at residues 1–39 (AKDKEKKEKKDKKKDDAPAEEAPAAAAAPAEEAAPTPSA) is disordered. Low complexity predominate over residues 20–39 (EEAPAAAAAPAEEAAPTPSA). 2 consecutive EF-hand domains span residues 55 to 90 (NQIQ…IGRE) and 124 to 159 (DTEG…VGDQ). Residues Asp68, Asp70, Asp72, and Asp79 each coordinate Ca(2+).

Myosin is a hexamer of 2 heavy chains and 4 light chains.

Its function is as follows. Plays an important role in regulation of muscle cell contractile activity. This Lumbricus terrestris (Common earthworm) protein is Myosin regulatory light chain, striated muscle, 25 kDa isoform.